We begin with the raw amino-acid sequence, 643 residues long: Replication protein E1 (643 aa).

Residues 81-83 carry the Nuclear localization signal motif; the sequence is KRK. Phosphoserine; by host occurs at positions 87, 91, and 105. Residues 104 to 113 carry the Nuclear export signal motif; that stretch reads ISPRLDAITL. The disordered stretch occupies residues 130-166; it reads LTDSGYGNTEVEAETQVERNGEPEDCGGGGQGRDTEG. Residues 181-347 form a DNA-binding region region; it reads QQHTGTTRVL…QTIVEHGLAD (167 aa). The region spanning 446-596 is the SF3 helicase domain; the sequence is IEFIPFLTKL…FPFDRNGNAL (151 aa). 472 to 479 serves as a coordination point for ATP; that stretch reads GPPDTGKS. Residue K553 forms a Glycyl lysine isopeptide (Lys-Gly) (interchain with G-Cter in SUMO) linkage.

The protein belongs to the papillomaviridae E1 protein family. Can form hexamers. Interacts with E2 protein; this interaction increases E1 DNA binding specificity. Interacts with host DNA polymerase subunit POLA2. Interacts with host single stranded DNA-binding protein RPA1. Interacts with host TOP1; this interaction stimulates the enzymatic activity of TOP1. In terms of processing, phosphorylated. Post-translationally, sumoylated.

Its subcellular location is the host nucleus. It catalyses the reaction Couples ATP hydrolysis with the unwinding of duplex DNA by translocating in the 3'-5' direction.. The enzyme catalyses ATP + H2O = ADP + phosphate + H(+). Its function is as follows. ATP-dependent DNA 3'-5' helicase required for initiation of viral DNA replication. It forms a complex with the viral E2 protein. The E1-E2 complex binds to the replication origin which contains binding sites for both proteins. During the initial step, a dimer of E1 interacts with a dimer of protein E2 leading to a complex that binds the viral origin of replication with high specificity. Then, a second dimer of E1 displaces the E2 dimer in an ATP-dependent manner to form the E1 tetramer. Following this, two E1 monomers are added to each half of the site, which results in the formation of two E1 trimers on the viral ori. Subsequently, two hexamers will be created. The double hexamer acts as a bi-directional helicase machinery and unwinds the viral DNA and then recruits the host DNA polymerase to start replication. The sequence is that of Replication protein E1 from Homo sapiens (Human).